The chain runs to 542 residues: CTP synthase (542 aa).

Residues 1 to 266 (MATNYIFVTG…DDLICQRFRL (266 aa)) form an amidoligase domain region. S14 contributes to the CTP binding site. Residue S14 coordinates UTP. ATP contacts are provided by residues 15–20 (SLGKGI) and D72. Mg(2+)-binding residues include D72 and E140. Residues 147-149 (DIE), 187-192 (KTKPTQ), and K223 each bind CTP. UTP-binding positions include 187-192 (KTKPTQ) and K223. 239–241 (KDV) contributes to the ATP binding site. The region spanning 291–542 (TIGMVGKYVE…VKAAKENQKK (252 aa)) is the Glutamine amidotransferase type-1 domain. G352 is a binding site for L-glutamine. C379 acts as the Nucleophile; for glutamine hydrolysis in catalysis. L-glutamine is bound by residues 380–383 (LGMQ), E403, and R470. Residues H515 and E517 contribute to the active site.

Belongs to the CTP synthase family. As to quaternary structure, homotetramer.

It catalyses the reaction UTP + L-glutamine + ATP + H2O = CTP + L-glutamate + ADP + phosphate + 2 H(+). It carries out the reaction L-glutamine + H2O = L-glutamate + NH4(+). The enzyme catalyses UTP + NH4(+) + ATP = CTP + ADP + phosphate + 2 H(+). Its pathway is pyrimidine metabolism; CTP biosynthesis via de novo pathway; CTP from UDP: step 2/2. Its activity is regulated as follows. Allosterically activated by GTP, when glutamine is the substrate; GTP has no effect on the reaction when ammonia is the substrate. The allosteric effector GTP functions by stabilizing the protein conformation that binds the tetrahedral intermediate(s) formed during glutamine hydrolysis. Inhibited by the product CTP, via allosteric rather than competitive inhibition. Its function is as follows. Catalyzes the ATP-dependent amination of UTP to CTP with either L-glutamine or ammonia as the source of nitrogen. Regulates intracellular CTP levels through interactions with the four ribonucleotide triphosphates. This Mannheimia succiniciproducens (strain KCTC 0769BP / MBEL55E) protein is CTP synthase.